We begin with the raw amino-acid sequence, 682 residues long: DNA-directed RNA polymerase subunit beta' (682 aa).

Residues cysteine 69, cysteine 71, cysteine 87, and cysteine 90 each coordinate Zn(2+). Mg(2+) contacts are provided by aspartate 489, aspartate 491, and aspartate 493.

It belongs to the RNA polymerase beta' chain family. RpoC1 subfamily. As to quaternary structure, in plastids the minimal PEP RNA polymerase catalytic core is composed of four subunits: alpha, beta, beta', and beta''. When a (nuclear-encoded) sigma factor is associated with the core the holoenzyme is formed, which can initiate transcription. Mg(2+) is required as a cofactor. It depends on Zn(2+) as a cofactor.

It localises to the plastid. The protein resides in the chloroplast. The enzyme catalyses RNA(n) + a ribonucleoside 5'-triphosphate = RNA(n+1) + diphosphate. In terms of biological role, DNA-dependent RNA polymerase catalyzes the transcription of DNA into RNA using the four ribonucleoside triphosphates as substrates. The polypeptide is DNA-directed RNA polymerase subunit beta' (Brachypodium distachyon (Purple false brome)).